Here is a 393-residue protein sequence, read N- to C-terminus: NAD(P)H-quinone oxidoreductase subunit H, chloroplastic (393 aa).

The protein belongs to the complex I 49 kDa subunit family. As to quaternary structure, NDH is composed of at least 16 different subunits, 5 of which are encoded in the nucleus.

The protein resides in the plastid. It localises to the chloroplast thylakoid membrane. The catalysed reaction is a plastoquinone + NADH + (n+1) H(+)(in) = a plastoquinol + NAD(+) + n H(+)(out). It catalyses the reaction a plastoquinone + NADPH + (n+1) H(+)(in) = a plastoquinol + NADP(+) + n H(+)(out). Functionally, NDH shuttles electrons from NAD(P)H:plastoquinone, via FMN and iron-sulfur (Fe-S) centers, to quinones in the photosynthetic chain and possibly in a chloroplast respiratory chain. The immediate electron acceptor for the enzyme in this species is believed to be plastoquinone. Couples the redox reaction to proton translocation, and thus conserves the redox energy in a proton gradient. The chain is NAD(P)H-quinone oxidoreductase subunit H, chloroplastic from Morus indica (Mulberry).